The sequence spans 721 residues: Vacuolar transporter chaperone complex subunit 4 (721 aa).

Residues 1-148 enclose the SPX domain; sequence MKFGEHLSKS…GFILKPVFQV (148 aa). The Cytoplasmic portion of the chain corresponds to 1–630; the sequence is MKFGEHLSKS…PKVYFATERT (630 aa). Lys-75 participates in a covalent cross-link: Glycyl lysine isopeptide (Lys-Gly) (interchain with G-Cter in ubiquitin). Positions 126–133 are important for inositol polyphosphate binding; it reads GFQKIIKK. Lys-200, Arg-264, Arg-266, Lys-281, Lys-294, Tyr-359, and Arg-361 together coordinate ATP. Glu-426 is a Mn(2+) binding site. Residue Lys-458 is part of the active site. The tract at residues 489 to 512 is disordered; it reads PLPTNIEITRPGRSDNEDNDFDED. 2 consecutive transmembrane segments (helical) span residues 631–651 and 652–672; these read YLSWLSISILLGGVSTTLLTY and GSPTAMIGSIGFFITSLAVLI. Residues 673–699 lie on the Cytoplasmic side of the membrane; the sequence is RTVMVYAKRVVNIRLKRAVDYEDKIGP. Residues 700-720 traverse the membrane as a helical segment; that stretch reads GMVSVFLILSILFSFFCNLVA. Residue Lys-721 is a topological domain, vacuolar.

This sequence belongs to the VTC4 family. In terms of assembly, the VTC core complex is an integral membrane heterooligomer composed of the catalytic subunit VTC4 and the accessory subunits VTC1, VTC2 and VTC3. The complex exists in 2 different sub-complexes: VTC1-VTC2-VCT4 and VCT1-VTC3-VTC4. The VCT1-VTC3-VTC4 subcomplex is mostly found on the vacuolar membrane. The VTC1-VTC2-VCT4 subcomplex is observed in the cell periphery, probably ER and nuclear envelope, but localizes to the vacuole under phosphate starvation. Each subunit contains 3 transmembrane helices. VTC1 is a small membrane protein without hydrophilic domain. VTC2, VTC3 and VTC4 are related and have 2 hydrophilic domains that face the cytosol, an N-terminal SPX domain and the central core domain. The central core in VTC4 is the catalytic domain, with the essential catalytic lysine replaced by isoleucine and leucine in VTC2 and VTC3, respectively. The core complex associates with the accessory subunit VTC5. The complex interacts with the v-SNARE NYV1 and with the V(0) subunit of V-ATPase VPH1. Mn(2+) is required as a cofactor.

The protein localises to the vacuole membrane. Its subcellular location is the cytoplasm. It localises to the cell cortex. The protein resides in the endoplasmic reticulum membrane. It is found in the cytoplasmic vesicle. The protein localises to the autophagosome membrane. The catalysed reaction is [phosphate](n) + ATP = [phosphate](n+1) + ADP. Its activity is regulated as follows. Activity of the enzyme is Mn(2+)-dependent and enhanced in the presence of pyrophosphate (PPi). Catalytic subunit of the vacuolar transporter chaperone (VTC) complex. The VTC complex acts as a vacuolar polyphosphate polymerase that catalyzes the synthesis of inorganic polyphosphate (polyP) via transfer of phosphate from ATP to a growing polyP chain, releasing ADP. VTC exposes its catalytic domain VTC4 to the cytosol, where the growing polyP chain winds through a tunnel-shaped pocket, integrating cytoplasmic polymer synthesis with polyP membrane translocation. The VTC complex carries 9 vacuolar transmembrane domains, which are likely to constitute the translocation channel into the organelle lumen. PolyP synthesis is tightly coupled to its transport into the vacuole lumen, in order to avoid otherwise toxic intermediates in the cytosol, and it depends on the proton gradient across the membrane, formed by V-ATPase. The VTC complex also plays a role in vacuolar membrane fusion. Required for SEC18/NSF activity in SNARE priming, membrane binding of LMA1 and V(0) trans-complex formation. Binds inositol hexakisphosphate (Ins6P) and similar inositol polyphosphates, such as 5-diphospho-inositol pentakisphosphate (5-InsP7); these are important intracellular signaling molecules. Inositol polyphosphate binding promotes vacuolar polyphosphate synthesis. The VTC complex is required for microautophagy. It is a constituent of autophagic tubes and is required for scission of microautophagic vesicles from these tubes. In Saccharomyces cerevisiae (strain ATCC 204508 / S288c) (Baker's yeast), this protein is Vacuolar transporter chaperone complex subunit 4.